We begin with the raw amino-acid sequence, 73 residues long: UPF0235 protein LBL_1291 (73 aa).

This sequence belongs to the UPF0235 family.

The protein is UPF0235 protein LBL_1291 of Leptospira borgpetersenii serovar Hardjo-bovis (strain L550).